Reading from the N-terminus, the 103-residue chain is Large ribosomal subunit protein bL21 (103 aa).

It belongs to the bacterial ribosomal protein bL21 family. As to quaternary structure, part of the 50S ribosomal subunit. Contacts protein L20.

This protein binds to 23S rRNA in the presence of protein L20. The chain is Large ribosomal subunit protein bL21 from Pseudoalteromonas atlantica (strain T6c / ATCC BAA-1087).